The sequence spans 135 residues: Interleukin-4 (135 aa).

Residues 1–24 form the signal peptide; that stretch reads MGLTYQLIPVLVCLLVCTSHFVHG. Disulfide bonds link Cys27-Cys135, Cys48-Cys85, and Cys70-Cys105. Asn62 is a glycosylation site (N-linked (GlcNAc...) asparagine).

The protein belongs to the IL-4/IL-13 family.

The protein resides in the secreted. Participates in at least several B-cell activation processes as well as of other cell types. It is a costimulator of DNA-synthesis. It induces the expression of class II MHC molecules on resting B-cells. It enhances both secretion and cell surface expression of IgE and IgG1. It also regulates the expression of the low affinity Fc receptor for IgE (CD23) on both lymphocytes and monocytes. Positively regulates IL31RA expression in macrophages. Stimulates autophagy in dendritic cells by interfering with mTORC1 signaling and through the induction of RUFY4. This Bubalus carabanensis (Swamp type water buffalo) protein is Interleukin-4 (IL4).